Reading from the N-terminus, the 620-residue chain is MAU2 chromatid cohesion factor homolog (620 aa).

3 TPR repeats span residues Phe90–Asn123, Gly445–Glu478, and Ser485–Ile518.

The protein belongs to the SCC4/mau-2 family. In terms of assembly, component of the cohesin loading complex.

It localises to the nucleus. The protein resides in the nucleoplasm. Functionally, required for association of the cohesin complex with chromatin during interphase. Plays a role in sister chromatid cohesion and normal progression through prometaphase. The chain is MAU2 chromatid cohesion factor homolog from Aedes aegypti (Yellowfever mosquito).